Here is a 296-residue protein sequence, read N- to C-terminus: Glycine--tRNA ligase alpha subunit (296 aa).

This sequence belongs to the class-II aminoacyl-tRNA synthetase family. Tetramer of two alpha and two beta subunits.

The protein resides in the cytoplasm. The enzyme catalyses tRNA(Gly) + glycine + ATP = glycyl-tRNA(Gly) + AMP + diphosphate. This chain is Glycine--tRNA ligase alpha subunit, found in Francisella tularensis subsp. novicida (strain U112).